Here is a 274-residue protein sequence, read N- to C-terminus: MKVLFRSDSSSQIGFGHIKRDLVLAKQYSDVSFACLPLEGSLIDEIPYPVYELSSESIYELINLIKEEKFELLIIDHYGISVDDEKLIKLETGVKILSFDDEIKPHHCDILLNVNAYAKASDYEGLVPFKCEVRCGFSYALIREEFYQEAKENREKKYDFFICMGGTDIKNLSLQIASELPKTKIISIATSSSNPNLKKLQKFAKLHNNIRLFIDHENIAKLMNESNKLIISASSLVNEALLLKANFKAICYVKNQESTATWLAKKGYEVEYKY.

15–16 (FG) serves as a coordination point for substrate. His-17 acts as the Proton acceptor in catalysis. Substrate is bound by residues Arg-143, 234 to 235 (SS), and Glu-239.

This sequence belongs to the PseG family. Monomer.

It carries out the reaction UDP-2,4-diacetamido-2,4,6-trideoxy-beta-L-altrose + H2O = 2,4-diacetamido-2,4,6-trideoxy-beta-L-altrose + UDP + H(+). Functionally, nucleotide sugar hydrolase that catalyzes the fourth step in the biosynthesis of pseudaminic acid, a sialic-acid-like sugar that is used to modify flagellin. Mediates the removal of UDP from C-1 of UDP-2,4-diacetamido-2,4,6-trideoxy-beta-L-altropyranose forming 2,4-diacetamido-2,4,6-trideoxy-beta-L-altropyranose. This is UDP-2,4-diacetamido-2,4,6-trideoxy-beta-L-altropyranose hydrolase (pseG) from Campylobacter jejuni subsp. jejuni serotype O:2 (strain ATCC 700819 / NCTC 11168).